Consider the following 206-residue polypeptide: Large ribosomal subunit protein mL62 (206 aa).

Residues 1 to 29 (MATAWGLRWGLSRTGTLLLAPPARCARRA) constitute a mitochondrion transit peptide. N5-methylglutamine is present on glutamine 90.

Belongs to the prokaryotic/mitochondrial release factor family. Mitochondrion-specific ribosomal protein mL62 subfamily. As to quaternary structure, component of the mitochondrial ribosome large subunit (39S) which comprises a 16S rRNA and about 50 distinct proteins. Methylation of glutamine in the GGQ triplet by HEMK1.

It localises to the mitochondrion. The catalysed reaction is an N-acyl-L-alpha-aminoacyl-tRNA + H2O = an N-acyl-L-amino acid + a tRNA + H(+). Its function is as follows. Essential peptidyl-tRNA hydrolase component of the mitochondrial large ribosomal subunit. Acts as a codon-independent translation release factor that has lost all stop codon specificity and directs the termination of translation in mitochondrion, possibly in case of abortive elongation. May be involved in the hydrolysis of peptidyl-tRNAs that have been prematurely terminated and thus in the recycling of stalled mitochondrial ribosomes. The polypeptide is Large ribosomal subunit protein mL62 (Mus musculus (Mouse)).